The following is a 448-amino-acid chain: Probable 3-ketoacyl-CoA thiolase (448 aa).

The active-site Acyl-thioester intermediate is the Cys110. Catalysis depends on proton acceptor residues His402 and Cys432.

This sequence belongs to the thiolase-like superfamily. Thiolase family.

The protein resides in the mitochondrion. It carries out the reaction an acyl-CoA + acetyl-CoA = a 3-oxoacyl-CoA + CoA. Its pathway is lipid metabolism; fatty acid beta-oxidation. Functionally, mitochondrial enzyme that catalyzes reactions of the mitochondrial beta-oxidation pathway. The polypeptide is Probable 3-ketoacyl-CoA thiolase (Caenorhabditis elegans).